The sequence spans 267 residues: Putative transcription factor Ovo-like 1 (267 aa).

C2H2-type zinc fingers lie at residues 118-140, 146-168, 174-197, and 213-236; these read FTCH…MKCH, HLCT…VRTH, YKCS…KKIH, and YVCE…KERH.

As to expression, expressed in skin, testis, kidney and weakly in lung. Not detected in heart, brain, spleen, liver and skeletal muscle.

The protein resides in the nucleus. Its function is as follows. Putative transcription factor. Involved in hair formation and spermatogenesis. May function in the differentiation and/or maintenance of the urogenital system. This chain is Putative transcription factor Ovo-like 1 (Ovol1), found in Mus musculus (Mouse).